A 473-amino-acid chain; its full sequence is Trigger factor (473 aa).

In terms of domain architecture, PPIase FKBP-type spans 171–256; it reads GDRVTIDFVG…VTKIQAAGEA (86 aa). The tract at residues 439-473 is disordered; the sequence is KEALFADEDGDDTTGGKPADKAEAKDESKTEAKAD. The span at 456–473 shows a compositional bias: basic and acidic residues; sequence PADKAEAKDESKTEAKAD.

This sequence belongs to the FKBP-type PPIase family. Tig subfamily.

The protein resides in the cytoplasm. It catalyses the reaction [protein]-peptidylproline (omega=180) = [protein]-peptidylproline (omega=0). Functionally, involved in protein export. Acts as a chaperone by maintaining the newly synthesized protein in an open conformation. Functions as a peptidyl-prolyl cis-trans isomerase. This Methylobacterium radiotolerans (strain ATCC 27329 / DSM 1819 / JCM 2831 / NBRC 15690 / NCIMB 10815 / 0-1) protein is Trigger factor.